A 588-amino-acid chain; its full sequence is DNA ligase (588 aa).

Glu250 contacts ATP. Lys252 (N6-AMP-lysine intermediate) is an active-site residue. 6 residues coordinate ATP: Arg257, Arg272, Glu302, Phe342, Arg417, and Lys423.

The protein belongs to the ATP-dependent DNA ligase family. It depends on Mg(2+) as a cofactor.

The enzyme catalyses ATP + (deoxyribonucleotide)n-3'-hydroxyl + 5'-phospho-(deoxyribonucleotide)m = (deoxyribonucleotide)n+m + AMP + diphosphate.. Functionally, DNA ligase that seals nicks in double-stranded DNA during DNA replication, DNA recombination and DNA repair. The sequence is that of DNA ligase from Nitrosopumilus maritimus (strain SCM1).